The chain runs to 125 residues: MSGRGKGKAKGTKSKTRSSRAGLQFPVGRVHRFLKKGNYGSRVGAGAPVYLAAVLEYLTAEILELAGNAARDNKKSRIIPRHLQLAVRNDEELNKLLGGVTIAQGGVLPNIQAVLLPKKTAKASK.

A compositionally biased stretch (basic residues) spans 1–18; sequence MSGRGKGKAKGTKSKTRS. Residues 1 to 21 form a disordered region; sequence MSGRGKGKAKGTKSKTRSSRA. Residue Ser-2 is modified to N-acetylserine. Ser-2 bears the Phosphoserine mark. Residue Gln-104 is modified to N5-methylglutamine. Lys-119 participates in a covalent cross-link: Glycyl lysine isopeptide (Lys-Gly) (interchain with G-Cter in ubiquitin).

The protein belongs to the histone H2A family. The nucleosome is a histone octamer containing two molecules each of H2A, H2B, H3 and H4 assembled in one H3-H4 heterotetramer and two H2A-H2B heterodimers. The octamer wraps approximately 147 bp of DNA. Post-translationally, monoubiquitination of Lys-119 gives a specific tag for epigenetic transcriptional repression. Phosphorylation of Ser-2 directly represses transcription.

The protein localises to the nucleus. It localises to the chromosome. Core component of nucleosome. Nucleosomes wrap and compact DNA into chromatin, limiting DNA accessibility to the cellular machineries which require DNA as a template. Histones thereby play a central role in transcription regulation, DNA repair, DNA replication and chromosomal stability. DNA accessibility is regulated via a complex set of post-translational modifications of histones, also called histone code, and nucleosome remodeling. The polypeptide is Late histone H2A.1 (Psammechinus miliaris (Green sea urchin)).